We begin with the raw amino-acid sequence, 343 residues long: Heat-inducible transcription repressor HrcA (343 aa).

It belongs to the HrcA family.

Functionally, negative regulator of class I heat shock genes (grpE-dnaK-dnaJ and groELS operons). Prevents heat-shock induction of these operons. This Mycobacterium ulcerans (strain Agy99) protein is Heat-inducible transcription repressor HrcA.